The following is a 251-amino-acid chain: tRNA (guanine-N(1)-)-methyltransferase (251 aa).

S-adenosyl-L-methionine-binding positions include Gly113 and 133–138 (IGDYVL).

It belongs to the RNA methyltransferase TrmD family. As to quaternary structure, homodimer.

It is found in the cytoplasm. It catalyses the reaction guanosine(37) in tRNA + S-adenosyl-L-methionine = N(1)-methylguanosine(37) in tRNA + S-adenosyl-L-homocysteine + H(+). In terms of biological role, specifically methylates guanosine-37 in various tRNAs. The polypeptide is tRNA (guanine-N(1)-)-methyltransferase (Methylococcus capsulatus (strain ATCC 33009 / NCIMB 11132 / Bath)).